Here is a 331-residue protein sequence, read N- to C-terminus: UPF0329 protein ECU01_0080/ECU01_1530/ECU02_1560/ECU04_0090/ECU08_0010/ECU08_2090 (331 aa).

Residues 305–320 are compositionally biased toward basic and acidic residues; that stretch reads QRSEMEKRDREQDPER. Positions 305–331 are disordered; that stretch reads QRSEMEKRDREQDPERRRLRARRVGSL. Basic residues predominate over residues 321-331; that stretch reads RRLRARRVGSL.

It belongs to the UPF0329 family.

In Encephalitozoon cuniculi (strain GB-M1) (Microsporidian parasite), this protein is UPF0329 protein ECU01_0080/ECU01_1530/ECU02_1560/ECU04_0090/ECU08_0010/ECU08_2090.